The following is a 449-amino-acid chain: UDP-N-acetylmuramoylalanine--D-glutamate ligase (449 aa).

118 to 124 (GTNGKTT) contacts ATP.

It belongs to the MurCDEF family.

It localises to the cytoplasm. The catalysed reaction is UDP-N-acetyl-alpha-D-muramoyl-L-alanine + D-glutamate + ATP = UDP-N-acetyl-alpha-D-muramoyl-L-alanyl-D-glutamate + ADP + phosphate + H(+). It participates in cell wall biogenesis; peptidoglycan biosynthesis. Functionally, cell wall formation. Catalyzes the addition of glutamate to the nucleotide precursor UDP-N-acetylmuramoyl-L-alanine (UMA). This is UDP-N-acetylmuramoylalanine--D-glutamate ligase from Staphylococcus epidermidis (strain ATCC 35984 / DSM 28319 / BCRC 17069 / CCUG 31568 / BM 3577 / RP62A).